We begin with the raw amino-acid sequence, 446 residues long: Probable polyamine aminopropyl transferase (446 aa).

Residues 1–117 (MVEPAIGRNH…KRIACVVSAV (117 aa)) are unknown. The disordered stretch occupies residues 64–94 (GRGAERWHRSPRQANGRFSNQRYSSTSPNSS). Residues 75–94 (RQANGRFSNQRYSSTSPNSS) show a composition bias toward polar residues. The 236-residue stretch at 116–351 (AVIFVATSCV…ELFAKKPGSG (236 aa)) folds into the PABS domain. The segment at 118–353 (IFVATSCVSP…FAKKPGSGSE (236 aa)) is spermidine synthase. S-methyl-5'-thioadenosine-binding positions include Asn-147, Glu-226, and 251 to 252 (DG). Asp-269 (proton acceptor) is an active-site residue.

This sequence belongs to the spermidine/spermine synthase family. Homodimer or homotetramer.

The protein localises to the cytoplasm. It carries out the reaction S-adenosyl 3-(methylsulfanyl)propylamine + putrescine = S-methyl-5'-thioadenosine + spermidine + H(+). The protein operates within amine and polyamine biosynthesis; spermidine biosynthesis; spermidine from putrescine: step 1/1. Catalyzes the irreversible transfer of a propylamine group from the amino donor S-adenosylmethioninamine (decarboxy-AdoMet) to putrescine (1,4-diaminobutane) to yield spermidine. The chain is Probable polyamine aminopropyl transferase (speE) from Bifidobacterium longum (strain NCC 2705).